Here is a 282-residue protein sequence, read N- to C-terminus: Acetyl-coenzyme A carboxylase carboxyl transferase subunit beta (282 aa).

The CoA carboxyltransferase N-terminal domain occupies 25–282; the sequence is VWRKCPHCNE…SQMLRIFMKQ (258 aa). Positions 29, 32, 48, and 51 each coordinate Zn(2+). The segment at 29–51 adopts a C4-type zinc-finger fold; the sequence is CPHCNEIIYAKEIERNLNVCPKC.

The protein belongs to the AccD/PCCB family. In terms of assembly, acetyl-CoA carboxylase is a heterohexamer composed of biotin carboxyl carrier protein (AccB), biotin carboxylase (AccC) and two subunits each of ACCase subunit alpha (AccA) and ACCase subunit beta (AccD). Requires Zn(2+) as cofactor.

It localises to the cytoplasm. It carries out the reaction N(6)-carboxybiotinyl-L-lysyl-[protein] + acetyl-CoA = N(6)-biotinyl-L-lysyl-[protein] + malonyl-CoA. It functions in the pathway lipid metabolism; malonyl-CoA biosynthesis; malonyl-CoA from acetyl-CoA: step 1/1. Component of the acetyl coenzyme A carboxylase (ACC) complex. Biotin carboxylase (BC) catalyzes the carboxylation of biotin on its carrier protein (BCCP) and then the CO(2) group is transferred by the transcarboxylase to acetyl-CoA to form malonyl-CoA. This Syntrophotalea carbinolica (strain DSM 2380 / NBRC 103641 / GraBd1) (Pelobacter carbinolicus) protein is Acetyl-coenzyme A carboxylase carboxyl transferase subunit beta.